The sequence spans 255 residues: Malonyl-[acyl-carrier protein] O-methyltransferase (255 aa).

Belongs to the methyltransferase superfamily.

The enzyme catalyses malonyl-[ACP] + S-adenosyl-L-methionine = malonyl-[ACP] methyl ester + S-adenosyl-L-homocysteine. It functions in the pathway cofactor biosynthesis; biotin biosynthesis. Its function is as follows. Converts the free carboxyl group of a malonyl-thioester to its methyl ester by transfer of a methyl group from S-adenosyl-L-methionine (SAM). It allows to synthesize pimeloyl-ACP via the fatty acid synthetic pathway. This chain is Malonyl-[acyl-carrier protein] O-methyltransferase, found in Serratia marcescens.